We begin with the raw amino-acid sequence, 306 residues long: Protoheme IX farnesyltransferase (306 aa).

8 consecutive transmembrane segments (helical) span residues 31-50, 55-77, 104-124, 125-145, 168-188, 218-235, 238-258, and 286-306; these read VIEL…QGGW, LILG…NCYI, LVFA…ISNW, LAAA…TLWL, WAAV…IVFL, GRAA…ATLA, LLLI…LAGG, and ASIS…LLPF.

This sequence belongs to the UbiA prenyltransferase family. Protoheme IX farnesyltransferase subfamily.

The protein resides in the cell membrane. The catalysed reaction is heme b + (2E,6E)-farnesyl diphosphate + H2O = Fe(II)-heme o + diphosphate. It functions in the pathway porphyrin-containing compound metabolism; heme O biosynthesis; heme O from protoheme: step 1/1. Functionally, converts heme B (protoheme IX) to heme O by substitution of the vinyl group on carbon 2 of heme B porphyrin ring with a hydroxyethyl farnesyl side group. The polypeptide is Protoheme IX farnesyltransferase (Clavibacter michiganensis subsp. michiganensis (strain NCPPB 382)).